The following is a 565-amino-acid chain: MTTREFDYIICGAGSAGNVLATRLTEDPGVTVLLLEAGGPDYRFDFRTQMPAALAYPLQGRRYNWAYETDPEPHMNHRRMECGRGKGLGGSSLINGMCYIRGNALDYDNWATHKGLEDWAYLDCLPYFRKAETRDVGPNDYHGGDGPVSVTTSKPGVNPLFEAMVEAGVQAGYPRTDDLNGYQQEGFGPMDRTVTPRGRRASTARGYLDQARARPNLEIVTHALADRILFSGKRATGVTFLHGSARVTAHARREVLVCSGAIASPQLLQRSGVGPGEWLRELDIPVVLDLPGVGRNLQDHLEMYIQFECKEPVSLYPALKWWNQPKIGLEWMLNGTGLGASNHFEAGGFIRTRDDDPWPNIQYHFLPVAINYNGSNAIEMHGFQAHVGSMRSPSRGRVKLKSRDPHAHPSILFNYMAEALDWREFRDAIRATREIMRQPALDRFRGRELNPGADLKSDNELDTFVRARAETAFHPSCSCKMGYDDMAVVDNEGRVHGIDGLRVVDASIMPIITTGNLNAPTIMIAEKIADRIRKHKPLERSNAQYYVANGAPARGGKPARAPAVV.

7–36 serves as a coordination point for FAD; that stretch reads DYIICGAGSAGNVLATRLTEDPGVTVLLLE. The Proton acceptor role is filled by histidine 474.

Belongs to the GMC oxidoreductase family. It depends on FAD as a cofactor.

The catalysed reaction is choline + A = betaine aldehyde + AH2. It catalyses the reaction betaine aldehyde + NAD(+) + H2O = glycine betaine + NADH + 2 H(+). It participates in amine and polyamine biosynthesis; betaine biosynthesis via choline pathway; betaine aldehyde from choline (cytochrome c reductase route): step 1/1. In terms of biological role, involved in the biosynthesis of the osmoprotectant glycine betaine. Catalyzes the oxidation of choline to betaine aldehyde and betaine aldehyde to glycine betaine at the same rate. This Burkholderia pseudomallei (strain 1710b) protein is Oxygen-dependent choline dehydrogenase.